The sequence spans 376 residues: 26S proteasome non-ATPase regulatory subunit 13 (376 aa).

The 168-residue stretch at 171–338 (SYYKDALRFL…KRVHMTWVQP (168 aa)) folds into the PCI domain. Lysine 298 carries the N6-acetyllysine modification.

This sequence belongs to the proteasome subunit S11 family. As to quaternary structure, component of the 19S proteasome regulatory particle complex. The 26S proteasome consists of a 20S core particle (CP) and two 19S regulatory subunits (RP). The regulatory particle is made of a lid composed of 9 subunits including PSMD13, a base containing 6 ATPases and few additional components.

Its function is as follows. Component of the 26S proteasome, a multiprotein complex involved in the ATP-dependent degradation of ubiquitinated proteins. This complex plays a key role in the maintenance of protein homeostasis by removing misfolded or damaged proteins, which could impair cellular functions, and by removing proteins whose functions are no longer required. Therefore, the proteasome participates in numerous cellular processes, including cell cycle progression, apoptosis, or DNA damage repair. This Homo sapiens (Human) protein is 26S proteasome non-ATPase regulatory subunit 13 (PSMD13).